A 416-amino-acid polypeptide reads, in one-letter code: MESYIQNLFAERIGGKSFGKEDVIYKFEKIKRAKQAAKLKYPDMELIDMGVGEPDEMADESVVEVLCEEAKKHVNRGYSDNGVQALKDEIPIYLEKIFGVKDLDPVNEVVHSIGSKPALAYITSVFINPGDVTLMTVPGYPVTATHTKWYGGSVETLPLLEKNNFLPELDAISKEVRENAKILYLNYPNNPTGAQATKKFYKEAVDFAFENDLIVIQDAAYAALTYGDKPLSFLSVKDAKEVGVEIHSFSKAYNMTGWRLAFVAGNELIVRGFAAVKDNYDSGQFIPIQKAGIHCLRHPEITEKTRAKYERRLSKMVKILKEAGFNAKMPGGTFYLYVKAPIGTKDGAKFANAEEFSQFMIKEKLISTVPWDDAGNFVRMAACFEAFKDGEISIEEEDRILNEVKRRLTEVEFVFE.

Residues Y25 and G52 each coordinate substrate. Pyridoxal 5'-phosphate-binding positions include Y78, S115–K116, Y140, N190, Y221, and S248–S250. Positions 116, 140, and 190 each coordinate substrate. K251 bears the N6-(pyridoxal phosphate)lysine mark. R259 provides a ligand contact to pyridoxal 5'-phosphate.

The protein belongs to the class-I pyridoxal-phosphate-dependent aminotransferase family. In terms of assembly, homodimer. Pyridoxal 5'-phosphate serves as cofactor.

The protein resides in the cytoplasm. It catalyses the reaction (2S,6S)-2,6-diaminopimelate + 2-oxoglutarate = (S)-2,3,4,5-tetrahydrodipicolinate + L-glutamate + H2O + H(+). It participates in amino-acid biosynthesis; L-lysine biosynthesis via DAP pathway; LL-2,6-diaminopimelate from (S)-tetrahydrodipicolinate (aminotransferase route): step 1/1. Involved in the synthesis of meso-diaminopimelate (m-DAP or DL-DAP), required for both lysine and peptidoglycan biosynthesis. Catalyzes the direct conversion of tetrahydrodipicolinate to LL-diaminopimelate. This chain is LL-diaminopimelate aminotransferase (dapL), found in Methanococcus maripaludis (strain DSM 14266 / JCM 13030 / NBRC 101832 / S2 / LL).